A 409-amino-acid chain; its full sequence is Nucleoprotein (409 aa).

Disordered stretches follow at residues 1–32, 46–68, 164–196, and 238–258; these read MASGKATGKTDAPAPVIKLGGPKPPKVGSSGN, IPPPKFEGSGVPDNENLKSSQQH, RSGRSTAASSAASSRAPSREVSRGRRSGSEDDL, and VDQVFGPRTKGKEGNFGDDKM. Positions 15 to 31 are enriched in low complexity; sequence PVIKLGGPKPPKVGSSG. The segment at 29-160 is RNA-binding; the sequence is SSGNASWFQA…GNFRWDFIPL (132 aa). Positions 31 to 156 constitute a CoV N NTD domain; that stretch reads GNASWFQAIK…GGPDGNFRWD (126 aa). The span at 166–179 shows a compositional bias: low complexity; it reads GRSTAASSAASSRA. Basic and acidic residues-rich tracts occupy residues 180–192 and 247–258; these read PSREVSRGRRSGS and KGKEGNFGDDKM. 2 positions are modified to phosphoserine; by host: Ser190 and Ser192. A CoV N CTD domain is found at 215–331; sequence TKAKADEMAH…QCVDGVGTRP (117 aa). The interval 226–333 is dimerization; it reads RYCKRTIPPN…VDGVGTRPKD (108 aa). Cys320 and Cys323 are disulfide-bonded. The interval 326-409 is disordered; sequence GVGTRPKDDE…GDAALGENEL (84 aa). A compositionally biased stretch (basic residues) spans 358-367; that stretch reads QRPKKEKKPK. Residues 368–384 are compositionally biased toward basic and acidic residues; that stretch reads KHDDEVDKALTSDEERN. Thr378 bears the Phosphothreonine; by host mark. Phosphoserine; by host is present on Ser379.

Belongs to the gammacoronavirus nucleocapsid protein family. As to quaternary structure, homooligomer. Both monomeric and oligomeric forms interact with RNA. Interacts with protein M. Interacts with NSP3; this interaction serves to tether the genome to the newly translated replicase-transcriptase complex at a very early stage of infection. In terms of processing, ADP-ribosylated. The ADP-ribosylation is retained in the virion during infection. Phosphorylated on serine and threonine residues.

It is found in the virion. The protein resides in the host endoplasmic reticulum-Golgi intermediate compartment. The protein localises to the host Golgi apparatus. In terms of biological role, packages the positive strand viral genome RNA into a helical ribonucleocapsid (RNP) and plays a fundamental role during virion assembly through its interactions with the viral genome and membrane protein M. Plays an important role in enhancing the efficiency of subgenomic viral RNA transcription as well as viral replication. This is Nucleoprotein from Avian infectious bronchitis virus (strain M41) (IBV).